We begin with the raw amino-acid sequence, 129 residues long: Small ribosomal subunit protein uS11 (129 aa).

This sequence belongs to the universal ribosomal protein uS11 family. As to quaternary structure, part of the 30S ribosomal subunit. Interacts with proteins S7 and S18. Binds to IF-3.

Its function is as follows. Located on the platform of the 30S subunit, it bridges several disparate RNA helices of the 16S rRNA. Forms part of the Shine-Dalgarno cleft in the 70S ribosome. The polypeptide is Small ribosomal subunit protein uS11 (Rhodopseudomonas palustris (strain HaA2)).